A 192-amino-acid polypeptide reads, in one-letter code: Thymidine kinase (192 aa).

ATP contacts are provided by residues 9–16 (SAMNAGKS) and 87–90 (DECQ). The active-site Proton acceptor is E88. Zn(2+)-binding residues include C145, C147, C182, and H185.

This sequence belongs to the thymidine kinase family. Homotetramer.

Its subcellular location is the cytoplasm. The enzyme catalyses thymidine + ATP = dTMP + ADP + H(+). The sequence is that of Thymidine kinase from Photobacterium profundum (strain SS9).